Here is a 1356-residue protein sequence, read N- to C-terminus: Vegetative incompatibility protein HET-E-1 (1356 aa).

An NACHT domain is found at 294–629 (RLLWINGDPG…DFLLGTASDK (336 aa)). 300 to 307 (GDPGKGKT) serves as a coordination point for GTP. 10 WD repeats span residues 839–869 (GHGSSVLSVAFSADGQRVASGSDDKTIKIWD), 881–911 (GHGGSVWSVAFSPDRERVASGSDDKTIKIWD), 923–953 (GHGGRVQSVAFSPDGQRVASGSDDHTIKIWD), 965–995 (GHGSSVLSVAFSPDGQRVASGSGDKTIKIWD), 1007–1037 (GHGGSVWSVAFSPDGQRVASGSDDKTIKIWD), 1049–1079 (GHGGWVQSVVFSPDGQRVASGSDDHTIKIWD), 1091–1121 (GHGDSVWSVAFSPDGQRVASGSIDGTIKIWD), 1133–1163 (GHGGWVHSVAFSPDGQRVASGSIDGTIKIWD), 1175–1205 (GHGGWVQSVAFSPDGQRVASGSSDKTIKIWD), and 1217–1247 (GHGGWVQSVAFSPDGQRVASGSSDNTIKIWD).

Responsible for vegetative incompatibility through specific interactions with different alleles of the unlinked gene, het-c. This chain is Vegetative incompatibility protein HET-E-1 (HET-E1), found in Podospora anserina (Pleurage anserina).